Reading from the N-terminus, the 684-residue chain is Multisite-specific tRNA:(cytosine-C(5))-methyltransferase (684 aa).

A compositionally biased stretch (basic residues) spans 1 to 12 (MARRKNFKKGNK). The tract at residues 1 to 24 (MARRKNFKKGNKKTFGARDDSRAQ) is disordered. S-adenosyl-L-methionine contacts are provided by residues 173 to 179 (CAAPGSK), Asp-202, Asp-229, and Asp-257. Cys-310 acts as the Nucleophile in catalysis. At Thr-426 the chain carries Phosphothreonine. Ser-431 bears the Phosphoserine mark. Residues 650-684 (KATPSAEEKEKEKETTESPAETTTGTSTEAPSAAN) form a disordered region. The span at 655-665 (AEEKEKEKETT) shows a compositional bias: basic and acidic residues. Positions 666–684 (ESPAETTTGTSTEAPSAAN) are enriched in low complexity. Position 667 is a phosphoserine (Ser-667).

The protein belongs to the class I-like SAM-binding methyltransferase superfamily. RsmB/NOP family. TRM4 subfamily.

The protein localises to the nucleus. It is found in the nucleolus. The enzyme catalyses cytidine(34) in tRNA precursor + S-adenosyl-L-methionine = 5-methylcytidine(34) in tRNA precursor + S-adenosyl-L-homocysteine + H(+). It carries out the reaction cytidine(40) in tRNA precursor + S-adenosyl-L-methionine = 5-methylcytidine(40) in tRNA precursor + S-adenosyl-L-homocysteine + H(+). The catalysed reaction is cytidine(48) in tRNA + S-adenosyl-L-methionine = 5-methylcytidine(48) in tRNA + S-adenosyl-L-homocysteine + H(+). It catalyses the reaction cytidine(49) in tRNA + S-adenosyl-L-methionine = 5-methylcytidine(49) in tRNA + S-adenosyl-L-homocysteine + H(+). Methylates cytosine to m5C at several positions in different tRNAs and pre-tRNAs containing intron. Able to modify tRNAs at all four positions (34, 40, 48 and 49) at which m5C has been found in tRNAs. May be involved in ribosome biogenesis as its disruption leads to increased sensitivity to the antibiotic paromomycin. The sequence is that of Multisite-specific tRNA:(cytosine-C(5))-methyltransferase (NCL1) from Saccharomyces cerevisiae (strain ATCC 204508 / S288c) (Baker's yeast).